Reading from the N-terminus, the 416-residue chain is Serine hydroxymethyltransferase (416 aa).

(6S)-5,6,7,8-tetrahydrofolate is bound by residues Leu121 and 125–127 (GHL). Lys229 is modified (N6-(pyridoxal phosphate)lysine).

Belongs to the SHMT family. Homodimer. Pyridoxal 5'-phosphate serves as cofactor.

It localises to the cytoplasm. It carries out the reaction (6R)-5,10-methylene-5,6,7,8-tetrahydrofolate + glycine + H2O = (6S)-5,6,7,8-tetrahydrofolate + L-serine. It participates in one-carbon metabolism; tetrahydrofolate interconversion. It functions in the pathway amino-acid biosynthesis; glycine biosynthesis; glycine from L-serine: step 1/1. In terms of biological role, catalyzes the reversible interconversion of serine and glycine with tetrahydrofolate (THF) serving as the one-carbon carrier. This reaction serves as the major source of one-carbon groups required for the biosynthesis of purines, thymidylate, methionine, and other important biomolecules. Also exhibits THF-independent aldolase activity toward beta-hydroxyamino acids, producing glycine and aldehydes, via a retro-aldol mechanism. This chain is Serine hydroxymethyltransferase, found in Bordetella avium (strain 197N).